A 592-amino-acid polypeptide reads, in one-letter code: Bifunctional dolabella-3,7-dien-18-ol synthase/dolathalia-3,7,11-triene synthase TPS20, chloroplastic (592 aa).

A chloroplast-targeting transit peptide spans 1 to 52 (MEAITKNGSLSQTLVHCGPKSLSSFIPVRCLRFSKNPFPKKLVVTRARTSIN). Mg(2+)-binding residues include Asp349, Asp353, Asp491, Thr495, and Glu499. The DDXXD motif signature appears at 349–353 (DDLYD).

Belongs to the terpene synthase family. Tpsa subfamily. Requires Mg(2+) as cofactor. It depends on Mn(2+) as a cofactor.

It localises to the plastid. The protein localises to the chloroplast. It carries out the reaction (2E,6E,10E)-geranylgeranyl diphosphate + H2O = (3E,7E)-dolabella-3,7-dien-18-ol + diphosphate. It catalyses the reaction (2E,6E,10E)-geranylgeranyl diphosphate = (3E,7E)-dolathalia-3,7,11-triene + diphosphate. Its pathway is secondary metabolite biosynthesis; terpenoid biosynthesis. Involved in the biosynthesis of diterpenes in roots. Possesses dolabella-3,7-dien-18-ol synthase activity and dolathalia-3,7,11-triene synthase activity in vitro. Catalyzes the formation of dolabella-3,7-dien-18-ol and dolathalia-3,7,11-triene from geranygeranyl diphosphate (GGPP). Does not seem to be involved in sesquiterpene biosynthesis. This chain is Bifunctional dolabella-3,7-dien-18-ol synthase/dolathalia-3,7,11-triene synthase TPS20, chloroplastic, found in Arabidopsis thaliana (Mouse-ear cress).